The sequence spans 597 residues: Protein disulfide isomerase-like 1-4 (597 aa).

Positions 1 to 25 are cleaved as a signal peptide; it reads MAFRVLLLFSLTALLIFSAVSPSFA. Composition is skewed to acidic residues over residues 37–49 and 61–84; these read LSFL…DDVP and DEFE…EGDF. Residues 37–101 form a disordered region; that stretch reads LSFLEDLKED…SDPLPTPEID (65 aa). The 124-residue stretch at 85 to 208 folds into the Thioredoxin 1 domain; that stretch reads SDLGNPDSDP…IVTWVKKKIG (124 aa). N-linked (GlcNAc...) asparagine glycosylation is present at Asn112. Active-site nucleophile residues include Cys132 and Cys135. The cysteines at positions 132 and 135 are disulfide-linked. N-linked (GlcNAc...) asparagine glycosylation is found at Asn213 and Asn342. Residues 429–550 enclose the Thioredoxin 2 domain; sequence FYKSDPIPEK…FYKFLRKHAT (122 aa). Catalysis depends on nucleophile residues Cys471 and Cys474. Cys471 and Cys474 are disulfide-bonded. Asn524 is a glycosylation site (N-linked (GlcNAc...) asparagine). The segment at 555–597 is disordered; the sequence is LEKPASTESPKTAESTPKVETTETKESPDSTTKSSQSDSKDEL. The segment covering 560–573 has biased composition (polar residues); the sequence is STESPKTAESTPKV. Positions 594–597 match the Prevents secretion from ER motif; that stretch reads KDEL.

This sequence belongs to the protein disulfide isomerase family. In terms of assembly, interacts with MEE8 and MED37A. Expressed in germinating seedling, including the cotyledons and hypocotyl, in vascular tissues, in pollen grains, root tips, leaf trichomes, developing seeds and siliques.

The protein resides in the endoplasmic reticulum lumen. It is found in the golgi apparatus. It localises to the vacuole. The protein localises to the nucleus. Its subcellular location is the secreted. The protein resides in the cell wall. It catalyses the reaction Catalyzes the rearrangement of -S-S- bonds in proteins.. Acts as a protein-folding catalyst that interacts with nascent polypeptides to catalyze the formation, isomerization, and reduction or oxidation of disulfide bonds. In Arabidopsis thaliana (Mouse-ear cress), this protein is Protein disulfide isomerase-like 1-4 (PDIL1-4).